Consider the following 270-residue polypeptide: MSNLQTRIITAIVLGTITLWLTWVGGVGFTLFSIAIGLAMFYEWTELSATRQTAFSRLFGWAWLIVTGILLILDRGALLTIGFLVAGCAILLVTQWKSGRGWPAAGLFYAGFSALSLSLLRGDEPFGFTTIVFLFAVVWSTDIAAYFNGRALGGPKLAPRFSPNKTWSGAIGGAAAAVTGGLLVASLVAAPGGWGVPVLALLLSIVSQIGDLAESWVKRQFGAKDSGRLLPGHGGVLDRVDGLVAAAALLYLFGAIFAEPDVPSAIFFSF.

Helical transmembrane passes span 19–39, 53–73, 76–96, 101–121, 126–146, 183–203, and 248–268; these read LWLTWVGGVGFTLFSIAIGLA, TAFSRLFGWAWLIVTGILLIL, GALLTIGFLVAGCAILLVTQW, GWPAAGLFYAGFSALSLSLLR, FGFTTIVFLFAVVWSTDIAAY, LVASLVAAPGGWGVPVLALLL, and ALLYLFGAIFAEPDVPSAIFF.

The protein belongs to the CDS family.

It localises to the cell inner membrane. It catalyses the reaction a 1,2-diacyl-sn-glycero-3-phosphate + CTP + H(+) = a CDP-1,2-diacyl-sn-glycerol + diphosphate. The protein operates within phospholipid metabolism; CDP-diacylglycerol biosynthesis; CDP-diacylglycerol from sn-glycerol 3-phosphate: step 3/3. The protein is Phosphatidate cytidylyltransferase (cdsA) of Brucella melitensis biotype 1 (strain ATCC 23456 / CCUG 17765 / NCTC 10094 / 16M).